The sequence spans 101 residues: Protein S100-A11 (101 aa).

EF-hand domains are found at residues 13-48 and 54-89; these read IESL…ELAS and KDPA…IAVA. Positions 30, 32, 37, 67, 69, 71, 73, and 78 each coordinate Ca(2+).

This sequence belongs to the S-100 family. As to quaternary structure, homodimer; disulfide-linked. Smooth muscle and non-muscle tissues.

This is Protein S100-A11 (S100A11) from Gallus gallus (Chicken).